The sequence spans 378 residues: MDIPPLAGRTVAMSLGALPVSYVLNQVSAFSQPLCVVLTSALVLGLLFMAVYSLSHGEITYDPLYAVFVVFSFTSVVDLVIALQEDGYLMGLMDFYAKEGEPYLRTAHGIFICYWDGTVHYLLYLTMAGAIRKRKRYRNLGLYWLGSFAMSLLVFLPGNILGKYSSEIRPTFFLAILYMLVPCWAGMRIFNQSPAPSSCTCDVVQEEQKKSLLQRPADLTLIVYLILAAFFTVFRGLVVLDCPADACFIYIYQYEPYLRDPVAYPKLQMLMYLFYALPFYCLAAYALTFPGCSWLPDWALVFAGAIGQAQFSHMGASMHLRTPFTYRVPEDTWATFLLSNLLFALGPHLLALRCLWRPAFFLRAAPPSSPQDQGKKQQ.

9 helical membrane-spanning segments follow: residues Leu-34–Leu-54, Pro-63–Leu-83, Ile-110–Ala-130, Leu-140–Ile-160, Pro-170–Phe-190, Leu-219–Val-239, Met-269–Phe-289, Gly-291–Phe-311, and Thr-332–Leu-352. EXPERA domains lie at Tyr-61–Gly-186 and Ala-217–Ala-351.

It belongs to the TM6SF family.

Its subcellular location is the endoplasmic reticulum membrane. The protein localises to the endoplasmic reticulum-Golgi intermediate compartment membrane. In terms of biological role, regulator of liver fat metabolism influencing triglyceride secretion and hepatic lipid droplet content. May function as sterol isomerase. The sequence is that of Transmembrane 6 superfamily member 2 (Tm6sf2) from Rattus norvegicus (Rat).